Here is a 334-residue protein sequence, read N- to C-terminus: Probable tRNA pseudouridine synthase B (334 aa).

Asp82 (nucleophile) is an active-site residue. The PUA domain maps to 250 to 325 (LPKIWIKDSA…IAVDVEKVFM (76 aa)).

Belongs to the pseudouridine synthase TruB family. Type 2 subfamily.

It catalyses the reaction uridine(55) in tRNA = pseudouridine(55) in tRNA. Its function is as follows. Could be responsible for synthesis of pseudouridine from uracil-55 in the psi GC loop of transfer RNAs. This is Probable tRNA pseudouridine synthase B from Pyrococcus horikoshii (strain ATCC 700860 / DSM 12428 / JCM 9974 / NBRC 100139 / OT-3).